Here is a 411-residue protein sequence, read N- to C-terminus: Alpha-1-antitrypsin 1-6 (411 aa).

Positions 1 to 25 (MTTPFSSHGLLLLVGLCCLLLITKT) are cleaved as a signal peptide. N-linked (GlcNAc...) asparagine glycans are attached at residues N50, N89, N101, and N164.

Belongs to the serpin family. Expressed predominantly in epididymis where it is found in the epithelial cells of the caput, corpus and cauda epididymis.

The protein localises to the secreted. Its function is as follows. Inhibitor of serine proteases. In Mus musculus (Mouse), this protein is Alpha-1-antitrypsin 1-6.